The primary structure comprises 106 residues: ATP-dependent Clp protease adapter protein ClpS (106 aa).

Belongs to the ClpS family. As to quaternary structure, binds to the N-terminal domain of the chaperone ClpA.

In terms of biological role, involved in the modulation of the specificity of the ClpAP-mediated ATP-dependent protein degradation. The protein is ATP-dependent Clp protease adapter protein ClpS of Salmonella gallinarum (strain 287/91 / NCTC 13346).